A 332-amino-acid chain; its full sequence is Alpha-N-acetylgalactosaminide alpha-2,6-sialyltransferase 6 (332 aa).

The disordered stretch occupies residues 1-26 (MACPRPLSQCDHTPLPGPPAGHWPLP). Over 1–42 (MACPRPLSQCDHTPLPGPPAGHWPLPLSRRRREMKSNKEQRS) the chain is Cytoplasmic. The chain crosses the membrane as a helical; Signal-anchor for type II membrane protein span at residues 43–63 (AVFVILFALITILILYSSSSA). Residues 64–332 (NEVFHYGSLR…GITFSHPSWT (269 aa)) lie on the Lumenal side of the membrane. N-linked (GlcNAc...) asparagine glycosylation is present at N97. Cysteines 107 and 255 form a disulfide.

This sequence belongs to the glycosyltransferase 29 family.

It is found in the golgi apparatus membrane. The enzyme catalyses a ganglioside GM1b (d18:1(4E)) + CMP-N-acetyl-beta-neuraminate = a ganglioside GD1alpha (d18:1(4E)) + CMP + H(+). The catalysed reaction is N-acetyl-alpha-neuraminosyl-(2-&gt;3)-beta-D-galactosyl-(1-&gt;3)-N-acetyl-beta-D-glucosaminyl-(1-&gt;3)-beta-D-galactosyl-(1-&gt;4)-beta-D-glucosyl-(1&lt;-&gt;1')-N-acyl-sphing-4-enine + CMP-N-acetyl-beta-neuraminate = N-acetyl-alpha-neuraminosyl-(2-&gt;3)-beta-D-galactosyl-(1-&gt;3)-[N-acetyl-alpha-neuraminosyl-(2-&gt;6)]-N-acetyl-beta-D-glucosaminyl-(1-&gt;3)-beta-D-galactosyl-(1-&gt;4)-beta-D-glucosyl-(1&lt;-&gt;1')-N-acyl-sphing-4-enine + CMP + H(+). It catalyses the reaction a globoside MSGG + CMP-N-acetyl-beta-neuraminate = a globoside DSGG + CMP + H(+). It carries out the reaction a ganglioside GD1a (d18:1(4E)) + CMP-N-acetyl-beta-neuraminate = a ganglioside GT1aalpha (d18:1(4E)) + CMP + H(+). The enzyme catalyses a ganglioside GT1b (d18:1(4E)) + CMP-N-acetyl-beta-neuraminate = a ganglioside GQ1balpha (d18:1(4E)) + CMP + H(+). The catalysed reaction is 3-O-[alpha-Neu5Ac-(2-&gt;3)-beta-D-Gal-(1-&gt;3)-alpha-D-GalNAc]-L-Ser-[protein] + CMP-N-acetyl-beta-neuraminate = a 3-O-{alpha-Neu5Ac-(2-&gt;3)-beta-D-Gal-(1-&gt;3)-[alpha-Neu5Ac-(2-&gt;6)]-alpha-D-GalNAc}-L-seryl-[protein] + CMP + H(+). It catalyses the reaction 3-O-[alpha-Neu5Ac-(2-&gt;3)-beta-D-Gal-(1-&gt;3)-alpha-D-GalNAc]-L-Thr-[protein] + CMP-N-acetyl-beta-neuraminate = a 3-O-{alpha-Neu5Ac-(2-&gt;3)-beta-D-Gal-(1-&gt;3)-[alpha-Neu5Ac-(2-&gt;6)]-alpha-D-GalNAc}-L-threonyl-[protein] + CMP + H(+). Its function is as follows. Transfers the sialyl group (N-acetyl-alpha-neuraminyl or NeuAc) from CMP-NeuAc onto glycoproteins and glycolipids, forming an alpha-2,6-linkage. Produces branched type disialyl structures by transfer of a sialyl group onto the GalNAc or GlcNAc residue inside backbone core chains having a terminal sialic acid with an alpha-2,3-linkage on Gal. ST6GalNAcVI prefers glycolipids to glycoproteins, predominantly catalyzing the biosynthesis of ganglioside GD1alpha from GM1b. Besides GMb1, MSGG and other glycolipids, it shows activity towards sialyl Lc4Cer generating disialyl Lc4Cer, which can lead to the synthesis of disialyl Lewis a (Le(a)), suggested to be a cancer-associated antigen. Also has activity toward GD1a and GT1b, and can generate DSGG (disialylgalactosylgloboside) from MSGG (monosialylgalactosylgloboside). This chain is Alpha-N-acetylgalactosaminide alpha-2,6-sialyltransferase 6 (ST6GALNAC6), found in Bos taurus (Bovine).